Reading from the N-terminus, the 355-residue chain is MKLSTRVTGLLNVKYPIIQAGMAGSTTPELVATVSNAGGLGTIGAGYFSSDRLEQEITYLQELTDLPYAVNLFVPSDKLYIPEKVEHMNAWLKPYRRAFNIEEPVINMTEKQQFKDAIDLVIEKGVPAVSFTFGIPEQTVIEKLKERHIKLIGTATSVEEAIANESAGMDMVIAQGSEAGGHRGAFSETASQLTPLIGTMSLVPQMVDQINIPVVAAGGIMDGRGLVASMVLGAEGVQMGTAFLTSDESGASQLYKHAISQSKETDTVVTNVITGKPARGIENEFIHKMNEYDDEIPDYPIQNQLTNALRKEAANKGNAQWTHLWSGQSPRLVQHMSAWALIENVVKQANEIMNR.

FMN is bound by residues N71, Q175, G180, G219, and 238 to 241 (QMGT).

Belongs to the nitronate monooxygenase family. NMO class I subfamily. Requires FMN as cofactor.

It catalyses the reaction 3 propionate 3-nitronate + 3 O2 + H2O = 3 3-oxopropanoate + 2 nitrate + nitrite + H2O2 + 3 H(+). Nitronate monooxygenase that uses molecular oxygen to catalyze the oxidative denitrification of alkyl nitronates. Acts on propionate 3-nitronate (P3N), the presumed physiological substrate. Probably functions in the detoxification of P3N, a metabolic poison produced by plants and fungi as a defense mechanism. The protein is Probable nitronate monooxygenase of Staphylococcus saprophyticus subsp. saprophyticus (strain ATCC 15305 / DSM 20229 / NCIMB 8711 / NCTC 7292 / S-41).